We begin with the raw amino-acid sequence, 267 residues long: Elsinochrome reductase 1 (267 aa).

The NADP(+) site is built by I26, D72, N99, and R132. The Proton donor role is filled by S149. 4 residues coordinate NADP(+): Y163, K167, I196, and T198. The Proton acceptor role is filled by Y163. Residue K167 is the Lowers pKa of active site Tyr of the active site.

Belongs to the short-chain dehydrogenases/reductases (SDR) family.

Reductase; part of the gene cluster that mediates the biosynthesis of elsinochromes, pigments consisting of at least four interconvertible tautomers (A, B, C and D) that have a core phenolic quinone to which various side chains are attached and which play an important role in fungal pathogenesis. The non-reducing polyketide synthase PKS1 was proposed to iteratively catalyze decarboxylation between acetyl-CoA and malonyl-CoA subunits for polyketide chain elongation. The released polyketide undergoes cyclization to form an aromatic ring, and proceeds via serial modification steps to produce the heptaketide back- bone of elsinochrome. As elsinochrome has a symmetrical structure, two identical heptaketides are fused to form a core 1,2-dihydrobenzo-perylene ring structure, which can then be successively modified to produce the various derivatives of elsinochrome. Some of these reactions may be cooperatively carried out, at least in part, by the products of RDT1, OXR1 and PKS1. PRF1, embedded within the elsinochrome cluster possibly functions to stabilize some of the biosynthetic enzymes required for elsinochrome production. As prefoldin is a hexamer containing 2 a and 4 b subunits, additional prefoldin subunits, whose coding genes may not immediately link to the elsinochrome biosynthetic gene cluster, are required to fulfill the chaperone function. In addition, no methyltransferase-coding gene exists within the biosynthetic gene cluster, even though elsinochrome has four methyl groups at positions C3, C7, C8 and C12. Apparently, the identified gene cluster does not contain the entire entourage of genes responsible for elsinochrome biosynthesis. Once elsinochrome is synthesized, it must be exported outside the fungal cells, which is probably accomplished by the ECT1 transporter, to avoid toxicity. In Elsinoe fawcettii (Citrus scab fungus), this protein is Elsinochrome reductase 1.